A 221-amino-acid chain; its full sequence is ATP-dependent dethiobiotin synthetase BioD (221 aa).

Residue 12 to 17 (EVGKTV) coordinates ATP. Residue Thr16 coordinates Mg(2+). The active site involves Lys39. Thr43 is a substrate binding site. Residues Asp47, 105–108 (EGLG), and 165–166 (SC) each bind ATP. The Mg(2+) site is built by Asp47 and Glu105.

It belongs to the dethiobiotin synthetase family. As to quaternary structure, homodimer. Mg(2+) is required as a cofactor.

It localises to the cytoplasm. It carries out the reaction (7R,8S)-7,8-diammoniononanoate + CO2 + ATP = (4R,5S)-dethiobiotin + ADP + phosphate + 3 H(+). The catalysed reaction is (7R,8S)-8-amino-7-(carboxyamino)nonanoate + ATP = (4R,5S)-dethiobiotin + ADP + phosphate + H(+). It functions in the pathway cofactor biosynthesis; biotin biosynthesis; biotin from 7,8-diaminononanoate: step 1/2. Catalyzes a mechanistically unusual reaction, the ATP-dependent insertion of CO2 between the N7 and N8 nitrogen atoms of 7,8-diaminopelargonic acid (DAPA, also called 7,8-diammoniononanoate) to form a ureido ring. This cyanobacterium does not encode bioA (which catalyzes the formation of the precursor for this reaction in the cannonical pathway), instead it encodes bioU, which replaces bioA and also performs the first half of the cannonical BioD reaction. Thus in this organism BioD has a different substrate. The sequence is that of ATP-dependent dethiobiotin synthetase BioD from Crocosphaera subtropica (strain ATCC 51142 / BH68) (Cyanothece sp. (strain ATCC 51142)).